The chain runs to 213 residues: Orotate phosphoribosyltransferase (213 aa).

Residue lysine 26 participates in 5-phospho-alpha-D-ribose 1-diphosphate binding. Residue 34-35 participates in orotate binding; sequence FF. 5-phospho-alpha-D-ribose 1-diphosphate contacts are provided by residues 72-73, arginine 99, lysine 100, lysine 103, histidine 105, and 124-132; these read YK and DDVITAGTA. Orotate is bound by residues threonine 128 and arginine 156.

It belongs to the purine/pyrimidine phosphoribosyltransferase family. PyrE subfamily. In terms of assembly, homodimer. The cofactor is Mg(2+).

The catalysed reaction is orotidine 5'-phosphate + diphosphate = orotate + 5-phospho-alpha-D-ribose 1-diphosphate. The protein operates within pyrimidine metabolism; UMP biosynthesis via de novo pathway; UMP from orotate: step 1/2. Catalyzes the transfer of a ribosyl phosphate group from 5-phosphoribose 1-diphosphate to orotate, leading to the formation of orotidine monophosphate (OMP). The polypeptide is Orotate phosphoribosyltransferase (Aliivibrio fischeri (strain MJ11) (Vibrio fischeri)).